Here is a 528-residue protein sequence, read N- to C-terminus: Phosphoenolpyruvate carboxykinase (ATP) (528 aa).

Substrate-binding residues include arginine 56, tyrosine 192, and lysine 198. ATP-binding positions include lysine 198, histidine 217, and 233–241 (GLSGTGKTT). Positions 198 and 217 each coordinate Mn(2+). A Mn(2+)-binding site is contributed by aspartate 254. 3 residues coordinate ATP: glutamate 282, arginine 319, and threonine 444. Arginine 319 provides a ligand contact to substrate.

It belongs to the phosphoenolpyruvate carboxykinase (ATP) family. The cofactor is Mn(2+).

It localises to the cytoplasm. It carries out the reaction oxaloacetate + ATP = phosphoenolpyruvate + ADP + CO2. Its pathway is carbohydrate biosynthesis; gluconeogenesis. Functionally, involved in the gluconeogenesis. Catalyzes the conversion of oxaloacetate (OAA) to phosphoenolpyruvate (PEP) through direct phosphoryl transfer between the nucleoside triphosphate and OAA. The sequence is that of Phosphoenolpyruvate carboxykinase (ATP) from Bacillus anthracis (strain A0248).